The sequence spans 104 residues: UPF0145 protein VIBHAR_02090 (104 aa).

This sequence belongs to the UPF0145 family.

This chain is UPF0145 protein VIBHAR_02090, found in Vibrio campbellii (strain ATCC BAA-1116).